We begin with the raw amino-acid sequence, 338 residues long: 3-keto-steroid reductase erg27 (338 aa).

NADP(+)-binding residues include Leu16, Thr44, Lys50, and Asp75. Residues Ser180 and Tyr203 each act as proton donor in the active site. 3 residues coordinate NADP(+): Tyr203, Lys207, and Thr236. The active-site Lowers pKa of active site Tyr is Lys207.

This sequence belongs to the short-chain dehydrogenases/reductases (SDR) family. ERG27 subfamily. In terms of assembly, heterotetramer of erg25, erg26, erg27 and erg28. Erg28 acts as a scaffold to tether erg27 and other 4,4-demethylation-related enzymes, forming a demethylation enzyme complex, in the endoplasmic reticulum.

It carries out the reaction 3-dehydro-4alpha-methylzymosterol + NADPH + H(+) = 4alpha-methylzymosterol + NADP(+). It functions in the pathway steroid biosynthesis; zymosterol biosynthesis; zymosterol from lanosterol: step 5/6. Its pathway is steroid metabolism; ergosterol biosynthesis. 3-keto-steroid reductase; part of the third module of ergosterol biosynthesis pathway that includes by the late steps of the pathway. Erg27 is a catalytic component of the C-4 demethylation complex that catalyze the reduction of the keto group on the C-3. The third module or late pathway involves the ergosterol synthesis itself through consecutive reactions that mainly occur in the endoplasmic reticulum (ER) membrane. Firstly, the squalene synthase erg9 catalyzes the condensation of 2 farnesyl pyrophosphate moieties to form squalene, which is the precursor of all steroids. Secondly, squalene is converted into lanosterol by the consecutive action of the squalene epoxidase erg1 and the lanosterol synthase erg7. The lanosterol 14-alpha-demethylase erg11/cyp1 catalyzes C14-demethylation of lanosterol to produce 4,4'-dimethyl cholesta-8,14,24-triene-3-beta-ol. In the next steps, a complex process involving various demethylation, reduction and desaturation reactions catalyzed by the C-14 reductase erg24 and the C-4 demethylation complex erg25-erg26-erg27 leads to the production of zymosterol. Erg28 likely functions in the C-4 demethylation complex reaction by tethering erg26 and Erg27 to the endoplasmic reticulum or to facilitate interaction between these proteins. Then, the sterol 24-C-methyltransferase erg6 catalyzes the methyl transfer from S-adenosyl-methionine to the C-24 of zymosterol to form fecosterol. The C-8 sterol isomerase erg2 catalyzes the reaction which results in unsaturation at C-7 in the B ring of sterols and thus converts fecosterol to episterol. The sterol-C5-desaturases erg31 and erg32 then catalyze the introduction of a C-5 double bond in the B ring to produce 5-dehydroepisterol. The C-22 sterol desaturase erg5 further converts 5-dehydroepisterol into ergosta-5,7,22,24(28)-tetraen-3beta-ol by forming the C-22(23) double bond in the sterol side chain. Finally, ergosta-5,7,22,24(28)-tetraen-3beta-ol is substrate of the C-24(28) sterol reductase erg4 to produce ergosterol. In the genus Schizosaccharomyces, a second route exists between lanosterol and fecosterol, via the methylation of lanosterol to eburicol by erg6, followed by C14-demethylation by erg11/cyp1 and C4-demethylation by the demethylation complex erg25-erg26-erg27. The polypeptide is 3-keto-steroid reductase erg27 (Schizosaccharomyces pombe (strain 972 / ATCC 24843) (Fission yeast)).